We begin with the raw amino-acid sequence, 486 residues long: MTTVYTLVSWLAILGYWLLIAGVTLRILMKRRAVPSAMAWLLIIYILPLVGIIAYLAVGELHLGKRRAERARAMWPSTAKWLNDLKACKHIFAEENSSVAAPLFKLCERRQGIAGVKGNQLQLMTESDDVMQALIRDIQLARHNIEMVFYIWQPGGMADQVAESLMAAARRGIHCRLMLDSAGSVAFFRSPWPELMRNAGIEVVEALKVNLMRVFLRRMDLRQHRKMIMIDNYIAYTGSMNMVDPRYFKQDAGVGQWIDLMARMEGPIATAMGIIYSCDWEIETGKRILPPPPDVNIMPFEQASGHTIHTIASGPGFPEDLIHQALLTAAYSAHEYLIMTTPYFVPSDDLLHAICTAAQRGVDVSIILPRKNDSMLVGWASRAFFTELLAAGVKIYQFEGGLLHTKSVLVDGELSLVGTVNLDMRSLWLNFEITLAIDDKGFGADLAAVQDDYISRSRLLDARLWLKRPLWQRVAERLFYFFSPLL.

2 consecutive transmembrane segments (helical) span residues 3-23 (TVYTLVSWLAILGYWLLIAGV) and 38-58 (MAWLLIIYILPLVGIIAYLAV). PLD phosphodiesterase domains follow at residues 219-246 (MDLRQHRKMIMIDNYIAYTGSMNMVDPR) and 399-426 (EGGLLHTKSVLVDGELSLVGTVNLDMRS). Active-site residues include His-224, Lys-226, Asp-231, His-404, Lys-406, and Asp-411.

It belongs to the phospholipase D family. Cardiolipin synthase subfamily. ClsA sub-subfamily.

It is found in the cell inner membrane. It carries out the reaction 2 a 1,2-diacyl-sn-glycero-3-phospho-(1'-sn-glycerol) = a cardiolipin + glycerol. In terms of biological role, catalyzes the reversible phosphatidyl group transfer from one phosphatidylglycerol molecule to another to form cardiolipin (CL) (diphosphatidylglycerol) and glycerol. This Shigella flexneri protein is Cardiolipin synthase A.